Consider the following 148-residue polypeptide: Aspartate carbamoyltransferase regulatory chain (148 aa).

The Zn(2+) site is built by Cys106, Cys111, Cys134, and Cys137.

The protein belongs to the PyrI family. In terms of assembly, contains catalytic and regulatory chains. Zn(2+) is required as a cofactor.

Involved in allosteric regulation of aspartate carbamoyltransferase. The chain is Aspartate carbamoyltransferase regulatory chain from Methanococcus maripaludis (strain C7 / ATCC BAA-1331).